Here is a 452-residue protein sequence, read N- to C-terminus: Phosphoglucosamine mutase (452 aa).

Ser105 (phosphoserine intermediate) is an active-site residue. Residues Ser105, Asp244, Asp246, and Asp248 each coordinate Mg(2+). Residue Ser105 is modified to Phosphoserine.

Belongs to the phosphohexose mutase family. Requires Mg(2+) as cofactor. Post-translationally, activated by phosphorylation.

It carries out the reaction alpha-D-glucosamine 1-phosphate = D-glucosamine 6-phosphate. Its function is as follows. Catalyzes the conversion of glucosamine-6-phosphate to glucosamine-1-phosphate. In Blochmanniella floridana, this protein is Phosphoglucosamine mutase.